The primary structure comprises 248 residues: Large ribosomal subunit protein uL4 (248 aa).

The interval 45 to 105 (PYGADPYAGM…KDQSKSVNTK (61 aa)) is disordered. Positions 92–105 (PKAEKDQSKSVNTK) are enriched in basic and acidic residues.

It belongs to the universal ribosomal protein uL4 family. Part of the 50S ribosomal subunit.

In terms of biological role, one of the primary rRNA binding proteins, this protein initially binds near the 5'-end of the 23S rRNA. It is important during the early stages of 50S assembly. It makes multiple contacts with different domains of the 23S rRNA in the assembled 50S subunit and ribosome. Its function is as follows. Forms part of the polypeptide exit tunnel. The polypeptide is Large ribosomal subunit protein uL4 (Haloquadratum walsbyi (strain DSM 16790 / HBSQ001)).